The following is a 143-amino-acid chain: 18.1 kDa class I heat shock protein (143 aa).

The 115-residue stretch at Glu29 to Ser143 folds into the sHSP domain.

Belongs to the small heat shock protein (HSP20) family. In terms of assembly, forms oligomeric structures.

The protein resides in the cytoplasm. The protein is 18.1 kDa class I heat shock protein (HSP18.1) of Medicago sativa (Alfalfa).